Consider the following 406-residue polypeptide: Argininosuccinate synthase (406 aa).

ATP-binding positions include 11–19 (AYSGGLDTS) and A38. The L-citrulline site is built by Y91 and S96. G121 contributes to the ATP binding site. Residues T123, N127, and D128 each contribute to the L-aspartate site. Position 127 (N127) interacts with L-citrulline. L-citrulline is bound by residues R131, S181, S190, E266, and Y278.

Belongs to the argininosuccinate synthase family. Type 1 subfamily. In terms of assembly, homotetramer.

The protein localises to the cytoplasm. The catalysed reaction is L-citrulline + L-aspartate + ATP = 2-(N(omega)-L-arginino)succinate + AMP + diphosphate + H(+). Its pathway is amino-acid biosynthesis; L-arginine biosynthesis; L-arginine from L-ornithine and carbamoyl phosphate: step 2/3. The protein is Argininosuccinate synthase of Campylobacter hominis (strain ATCC BAA-381 / DSM 21671 / CCUG 45161 / LMG 19568 / NCTC 13146 / CH001A).